A 492-amino-acid polypeptide reads, in one-letter code: Cytochrome P450 monooxygenase MYCFIDRAFT_204672 (492 aa).

Asn116 is a glycosylation site (N-linked (GlcNAc...) asparagine). Residues Phe269–Ala293 form a helical membrane-spanning segment. The N-linked (GlcNAc...) asparagine glycan is linked to Asn335. Position 430 (Cys430) interacts with heme.

This sequence belongs to the cytochrome P450 family. Heme serves as cofactor.

Its subcellular location is the membrane. Its pathway is secondary metabolite biosynthesis. Functionally, cytochrome P450 monooxygenase; part of the gene cluster that mediates the biosynthesis of an emodin derivative that may be involved in black Sigatoka disease of banana. The pathway begins with the synthesis of atrochrysone thioester by the polyketide synthase PKS8-1. The atrochrysone carboxyl ACP thioesterase MYCFIDRAFT_190111 then breaks the thioester bond and releases the atrochrysone carboxylic acid from PKS8-1. The decarboxylase MYCFIDRAFT_34057 then catalyzes the concerted decarboxylation-elimination required to convert atochrysone carboxylic acid into emodin anthrone, which is further oxidized to emodin by the anthrone oxygenase MYCFIDRAFT_34418. The functions of the other tailoring enzymes as well as the final product of the cluster have still to be identified. The chain is Cytochrome P450 monooxygenase MYCFIDRAFT_204672 from Pseudocercospora fijiensis (strain CIRAD86) (Black leaf streak disease fungus).